The primary structure comprises 218 residues: Alkylmercury lyase (218 aa).

It belongs to the MerB family.

It carries out the reaction an alkylmercury + H(+) = an alkane + Hg(2+). Cleaves the carbon-mercury bond of organomercurials such as phenylmercuric acetate. One product is Hg(2+), which is subsequently detoxified by the mercuric reductase. The sequence is that of Alkylmercury lyase from Clostridium butyricum.